We begin with the raw amino-acid sequence, 201 residues long: Ras-related protein RabA (201 aa).

A GTP-binding site is contributed by 15-22 (GDSGVGKS). An Effector region motif is present at residues 37 to 45 (YISTIGVDF). Residues 63-67 (DTAGQ) and 121-124 (NKSD) each bind GTP. Cys-198 carries the cysteine methyl ester modification. A lipid anchor (S-geranylgeranyl cysteine) is attached at Cys-198. A propeptide spans 199–201 (IIN) (removed in mature form).

It belongs to the small GTPase superfamily. Rab family.

The protein resides in the cell membrane. This is Ras-related protein RabA (rabA) from Dictyostelium discoideum (Social amoeba).